A 242-amino-acid polypeptide reads, in one-letter code: Uridylate kinase (242 aa).

Residue 12-15 (KLSG) participates in ATP binding. The tract at residues 20–25 (GEKGYG) is involved in allosteric activation by GTP. Gly-55 serves as a coordination point for UMP. ATP contacts are provided by Gly-56 and Arg-60. Residues Asp-75 and 136 to 143 (TGNPYFST) contribute to the UMP site. 2 residues coordinate ATP: Tyr-169 and Asp-172.

Belongs to the UMP kinase family. In terms of assembly, homohexamer.

Its subcellular location is the cytoplasm. The enzyme catalyses UMP + ATP = UDP + ADP. It functions in the pathway pyrimidine metabolism; CTP biosynthesis via de novo pathway; UDP from UMP (UMPK route): step 1/1. Allosterically activated by GTP. Inhibited by UTP. In terms of biological role, catalyzes the reversible phosphorylation of UMP to UDP. The sequence is that of Uridylate kinase from Carboxydothermus hydrogenoformans (strain ATCC BAA-161 / DSM 6008 / Z-2901).